Here is a 319-residue protein sequence, read N- to C-terminus: Cell division protein FtsQ (319 aa).

Positions 1–53 (MDSREDMVPDVLLEAPNPRRRQSADTSTERPTRPARREQGYARVTPRGERMGN) are disordered. Over 1–70 (MDSREDMVPD…PDFFAWFDPR (70 aa)) the chain is Cytoplasmic. Basic and acidic residues predominate over residues 27-52 (STERPTRPARREQGYARVTPRGERMG). Residues 71–87 (WLWVPLMVCLAVGGYWA) form a helical membrane-spanning segment. Residues 88–319 (YEPLEKLLER…NATRNAPTHP (232 aa)) are Periplasmic-facing. Residues 97–166 (RPFKSVVVEG…DTLVVKIAEQ (70 aa)) enclose the POTRA domain.

Belongs to the FtsQ/DivIB family. FtsQ subfamily. In terms of assembly, part of a complex composed of FtsB, FtsL and FtsQ.

The protein localises to the cell inner membrane. In terms of biological role, essential cell division protein. May link together the upstream cell division proteins, which are predominantly cytoplasmic, with the downstream cell division proteins, which are predominantly periplasmic. May control correct divisome assembly. The polypeptide is Cell division protein FtsQ (Cellvibrio japonicus (strain Ueda107) (Pseudomonas fluorescens subsp. cellulosa)).